We begin with the raw amino-acid sequence, 3471 residues long: MQSFLLSSKNQAKLLHAGLEFVGGVRCAHQGWVSGKAVVFCNYCNFAHRLYRFYTKNHCVLNKETIENLCGRSFVSLYRAGLLLDDFTIDDLLGKGKYAKGSIDNLSIPFDDCALCPNAGTRLSQTGVSHDHFVCNYVEHLFECASFSRETGGKFIRACSKGWHWNATCTTCGASCRFANPRENVVIAIFMNFLRVMYDGNKYYVSLHCDTEWIPVHPLFARLVLMVRGFAPLDNSHVIEEDEMDICGHPSEVTYDDPSNYAFSHQHVTRGVGMGHLAFCRDANGVDRGEHKFYLHGPFDLKMTHAMFRVFMILLNCHGYVQSEFREEHPAVKDRSLCALLSVAGLRGVNIACNEEFIHLHSQFHNGSFRSQRPIPMVYAEPEMYPPLEYVRLTESWVPRGRVMIDDLPSLLSRVYAESSQPHAGEIYEEIFDEDDLFELGDDEGTSTRGLLDLGRRLGGLLLGATKCVKGLHAVIEWPVDVLTKEAEDLGTWLADNKKYVSESTWSCQVCPEVQDALEKSMREQAKLNAQVIGGIKKLATTMDSATSKLKDSLKELERRISVLEQGVDETQQARITNLENFCEDAAKAFDALRADIDALKKKPAQSVTPLPSPSGNSGTAGEQRPPPRRRPPVVEMSEAQAGETVIVGGDEEQEAHQDSSVAAAGPTDEHNAMLQKIYLGSFKWKVSDGGGSILKTFSLPSDIWAANDRMKNFLSYFQYYTCEGMTFTLTITSIGLHGGTLLVAWDALSSATRRGIVSMIQLSNLPSMTLHASGSSIGTLTVTSPAIQHQICTSGSEGSIANLGSLVISVANVLCADSASAQELNVNAWVQFDKPKLSYWTAQHTIAQSGGFEESQDLGDLQAIIATGKWSTTSDKNLMEIIVHPTACYVSEKLIYQTNLSVVAHMFAKWSGSMKYTFVFGASMFDRGKIMVSAVPVQFRNSKLTLSQMAAFPSMVCDLSVETREFTFEVPYISIGKMSLVCKDYLFDISSYNADLVVSRLHVMILDPLVKTGNASNSIGFYVVAGPGKDFKLHQMCGVKSQFAHDVLTAQDFGRSLSCSRLLGNGFKEWCSRESLLMRIPLKNGKKRAFKYAVTPRMRTLPPEATSLSWLSQIFVEWRGSLTYTIHVQSGSAIQHSYMRIWYDPNGKTDEKEIKFLDSAHPPAGIKVYHWDLKIGDSFRFTVPYCARTEKLQIPKAYASTPYEWLTMYNGAVTIDLRSGADMELFVSIAGGDDFEMFEQTVPPKCGSVSDSYTVLSYADDIKSVTEVPNKTTYLADEQPTTSAPRTSTVDTEEDPPTEGEIARTSNGTLVQYRGGAWKPMVERTPTMSKKQVGPELVASDSHMYKCIKNMNKNVKILTDRQCTAKLADIVDSTQGLVGSNSTFVEDLAVGAKQIRKFGESLEVFEGSMSAAKTAELIDNTHAAFSGPADGSPISNVVQLLLPMLSSIKGMSGKMESKMASLTAMFQPCKKAITHLIERSFPYLACKGFKTDKWIWAALASILVGAALLHYYRSDLKFVKKWSVMCMIIWAPLLAEKAYHLGTWIKEKFLKSLPRTRTIKDSCRKHSLAGAFECLASASCAYIKDNWAKTMSSLLTILSVVASLVMWGKIPDDKEITSFADKFHSIGKKGRSITNIIGGFEKITSVCKKWSETLVGWIVSNVSGGIPKEDLAMTAYLGFKIHDWVRETRDMALMENRFQGFGGDEHLVRVRRLYGHSLKIDNALMEKQIVPDMQLSLIIKECRQKCLELMNESYTYKGMKQSRIDPLHVCMLGAPGVGKSTIAHVVINNLLDHRGEPEVDRIYTRCCADAYWSNYHQEPVILYDDLGAIKSNLRLSDYAEIMGIKTNDPFSVPMAAVEDKGKHCTSKYVFSCTNVLNLDDTGDVVTKMAYYRRRNVLVKVERDPDVPKNEANPTEGLVFTVLGHDQNCQGDPQFVVKENWDEPFLREVDTEGWRFERVEYRTFLRFLCMYTDAYMYSQEQVLQGIKTFKMNPFAPEPEFAQAQSGEAAECEIVEETQEIPGEAPQEVKELAKIETAPNMDELVEAFNKLRVTPGHLNEILRDGSGCYIDEWAIAGPRWLSFHELLPFTCGCHHTRVCDFNIVYNNMCKAVRSQSVHFKYRANQAIKYAYTHKLHSQCRYSIDFEKLRECNPLDVFVCVLSKYTADDHSFERRCPKKMNVVRMQRPPVFELKMRPPSDSVVVEDDQGQRAFEWPHLYTFLRYRAIEFKDDKGSLTVREDASADVCPWNEFLKLPWLDGDQLKSVLPAHLHRMVQARLEQVEIMEENGNYSGEMRNAIAEIKEYLDQDHQWVAALVLVACAVKERRKMTHDKLHRKSFNALDRLDKWYTTTAPKTSKKMKILLAIGASVAVAGVAVGAVILLQKTNLFGSKEDEEIEGEEGETQASGAHESDGIVTQHLKRDIRPKMRVTYTDHHVAEAHEEKSTEKPRKPGNPTRKNFLGLSPGFAERGMGVTYEEHTPLKDALLDESNKVFRRKIVASVESAVKQGGKASKDSVLSQISEWQDKVRATGVIAARQLEASGSLKKIHNLNSRRTSSHVMPGLVVHDGTFERSDEVDAELHRITIDEVKSCPKMIKEGVSTLSVKKASVGVLALQKAESQLSFPFTSRAGVDRDLSMTNLIDTHMAGMSCIIISELGNVFRTFGVLRLCGTYVCMPAHYLDEITSEHTLYFVCPSKITQIQLERHRVCLVNGFQETVVWDLGPSVPPSRNYIDFTAKADDWKNYKATSGALVMSKYLVDSMLQCVHFLDSIELTEANVSVPTSYYEANGGIHTIISGLRYRVHCMPGFCGAAIMRADATCYRKIIGMHVSGLRNKCMGYAETLTQEHLMRAIETLKETGLLKHIPRGAIGAGEEKLPEHSKKQSLSLEGKGNLGIVGQLPAQLVPTSVTKTTICKSMIHGLIGEIKTEPSVLSAWDRRLPFPPGEWDPMKDAVKKYGSYILPFPTEEIQEVENFLIKKFRRKENSRRTRNVNSLEVGINGIDGSDFWSPIEMKTSPGYPYILKRPSGAQGKKYLFEELEPYPSGRPKYAMKDPELIENYERIKEEVTSGVKPSIMTMECLKDERRKLAKIYEKPATRTFTILSPEVNILFRQYFGDFAAMVMSTRREHFSQVGINPESMEWSDLINSLLRVNTKGFAGDYSKFDGIGSPAIYHSIVNVVNAWYDDGEVNARARHSLISSIVHRDGICGDLILRYSQGMPSGFAMTVIFNSFVNYYFMALAWMSTVGSSLLSPQGSCKDFDTYCKIVAYGDDNVVSVHEEFLDVYNLQTVAAYLSHFGVTYTDGDKNPIHMSKPYEDITKMSFLKRGFERVESSGFLWKAPLDKTSIEERLNWIRDCPTPVEALEQNIESALHEAAIHGRDYFDDLVQRLNSALKRVMLPPTDISFEECQARWWASVTGDALRAADYSSLVRRASSGHVEFNKKYRDMFRQQDLPLKEILMKSKPVALLDLEV.

A coiled-coil region spans residues 513–603; sequence EVQDALEKSM…RADIDALKKK (91 aa). 2 disordered regions span residues 603 to 639 and 1271 to 1307; these read KPAQSVTPLPSPSGNSGTAGEQRPPPRRRPPVVEMSE and NKTTYLADEQPTTSAPRTSTVDTEEDPPTEGEIARTS. 2 stretches are compositionally biased toward polar residues: residues 606 to 621 and 1271 to 1291; these read QSVTPLPSPSGNSGTA and NKTTYLADEQPTTSAPRTSTV. Transmembrane regions (helical) follow at residues 1493–1513 and 1592–1612; these read DKWIWAALASILVGAALLHYY and MSSLLTILSVVASLVMWGKIP. In terms of domain architecture, SF3 helicase spans 1748-1914; it reads LELMNESYTY…PDVPKNEANP (167 aa). An ATP-binding site is contributed by 1774-1781; that stretch reads GAPGVGKS. Residues 2360 to 2380 form a helical membrane-spanning segment; that stretch reads ILLAIGASVAVAGVAVGAVIL. Residues 2391–2401 show a composition bias toward acidic residues; it reads EDEEIEGEEGE. Disordered regions lie at residues 2391 to 2411 and 2435 to 2460; these read EDEEIEGEEGETQASGAHESD and VAEAHEEKSTEKPRKPGNPTRKNFLG. Residues 2435 to 2448 are compositionally biased toward basic and acidic residues; sequence VAEAHEEKSTEKPR. The region spanning 2629-2847 is the Peptidase C3 domain; sequence GVDRDLSMTN…YAETLTQEHL (219 aa). Residues His-2677, Glu-2714, and Cys-2808 each act as for picornain 3C-like protease activity in the active site. The 132-residue stretch at 3152–3283 folds into the RdRp catalytic domain; the sequence is TKGFAGDYSK…SVHEEFLDVY (132 aa).

Post-translationally, specific enzymatic cleavages by picornain 3C-like protease in vivo yield mature proteins. Picornain 3C-like protease is autocatalytically processed.

The protein localises to the virion. The protein resides in the host membrane. It catalyses the reaction RNA(n) + a ribonucleoside 5'-triphosphate = RNA(n+1) + diphosphate. Its function is as follows. Picornain 3C-like protease is a thiol protease that probably cleaves the polyprotein. The chain is Genome polyprotein from Oryza sativa (Rice).